Reading from the N-terminus, the 129-residue chain is UPF0325 protein YE3288 (129 aa).

This sequence belongs to the UPF0325 family.

The protein is UPF0325 protein YE3288 of Yersinia enterocolitica serotype O:8 / biotype 1B (strain NCTC 13174 / 8081).